Consider the following 162-residue polypeptide: Phosphopantetheine adenylyltransferase (162 aa).

A substrate-binding site is contributed by T10. ATP contacts are provided by residues 10 to 11 (TF) and H18. Substrate-binding residues include K42, L74, and R88. ATP contacts are provided by residues 89–91 (GLR), E99, and 124–130 (FSCISST).

The protein belongs to the bacterial CoaD family. As to quaternary structure, homohexamer. The cofactor is Mg(2+).

It is found in the cytoplasm. The enzyme catalyses (R)-4'-phosphopantetheine + ATP + H(+) = 3'-dephospho-CoA + diphosphate. The protein operates within cofactor biosynthesis; coenzyme A biosynthesis; CoA from (R)-pantothenate: step 4/5. Functionally, reversibly transfers an adenylyl group from ATP to 4'-phosphopantetheine, yielding dephospho-CoA (dPCoA) and pyrophosphate. The chain is Phosphopantetheine adenylyltransferase from Francisella tularensis subsp. mediasiatica (strain FSC147).